The chain runs to 220 residues: Claudin-3 (220 aa).

The Cytoplasmic segment spans residues 1–8 (MSMGLEIT). The helical transmembrane segment at 9–29 (GTALAVLGWLGTIVCCALPMW) threads the bilayer. Residues 30 to 80 (RVSAFIGSNIITSQNIWEGLWMNCVVQSTGQMQCKVYDSLLALPQDLQAAR) lie on the Extracellular side of the membrane. Residues 81-101 (ALIVVAILLAAFGLLVALVGA) form a helical membrane-spanning segment. At 102 to 115 (QCTNCVQDDTAKAK) the chain is on the cytoplasmic side. A helical membrane pass occupies residues 116 to 136 (ITIVAGVLFLLAALLTLVPVS). Topologically, residues 137 to 159 (WSANTIIRDFYNPVVPEAQKREM) are extracellular. A helical transmembrane segment spans residues 160-180 (GAGLYVGWAAAALQLLGGALL). The Cytoplasmic portion of the chain corresponds to 181–220 (CCSCPPREKKYTATKVVYSAPRSTGPGASLGTGYDRKDYV). Y198 carries the phosphotyrosine modification. S199 and S209 each carry phosphoserine. The tract at residues 219–220 (YV) is interactions with TJP1, TJP2 and TJP3.

It belongs to the claudin family. As to quaternary structure, can form homo- and heteropolymers with other CLDN. Homopolymers interact with CLDN1 and CLDN2 homopolymers. Interacts in cis (within the same plasma membrane) with CLDN19. Directly interacts with TJP1/ZO-1, TJP2/ZO-2 and TJP3/ZO-3.

It is found in the cell junction. It localises to the tight junction. Its subcellular location is the cell membrane. In terms of biological role, barrier-forming claudin. Plays a major role in tight junction-specific obliteration of the intercellular space, through calcium-independent cell-adhesion activity. The polypeptide is Claudin-3 (CLDN3) (Homo sapiens (Human)).